Consider the following 519-residue polypeptide: NADH-quinone oxidoreductase subunit C/D (519 aa).

The tract at residues 1-138 (MSERIEIPAE…TNEEPVDTTQ (138 aa)) is NADH dehydrogenase I subunit C. The interval 159–519 (DEYIINIGPQ…VDYVVPDIDR (361 aa)) is NADH dehydrogenase I subunit D.

This sequence in the N-terminal section; belongs to the complex I 30 kDa subunit family. It in the C-terminal section; belongs to the complex I 49 kDa subunit family. As to quaternary structure, NDH-1 is composed of 13 different subunits. Subunits NuoB, CD, E, F, and G constitute the peripheral sector of the complex.

It is found in the cell inner membrane. The catalysed reaction is a quinone + NADH + 5 H(+)(in) = a quinol + NAD(+) + 4 H(+)(out). NDH-1 shuttles electrons from NADH, via FMN and iron-sulfur (Fe-S) centers, to quinones in the respiratory chain. The immediate electron acceptor for the enzyme in this species is believed to be a menaquinone. Couples the redox reaction to proton translocation (for every two electrons transferred, four hydrogen ions are translocated across the cytoplasmic membrane), and thus conserves the redox energy in a proton gradient. The polypeptide is NADH-quinone oxidoreductase subunit C/D (Phocaeicola vulgatus (strain ATCC 8482 / DSM 1447 / JCM 5826 / CCUG 4940 / NBRC 14291 / NCTC 11154) (Bacteroides vulgatus)).